The chain runs to 237 residues: Phosphoribosylaminoimidazole-succinocarboxamide synthase (237 aa).

The protein belongs to the SAICAR synthetase family.

The catalysed reaction is 5-amino-1-(5-phospho-D-ribosyl)imidazole-4-carboxylate + L-aspartate + ATP = (2S)-2-[5-amino-1-(5-phospho-beta-D-ribosyl)imidazole-4-carboxamido]succinate + ADP + phosphate + 2 H(+). The protein operates within purine metabolism; IMP biosynthesis via de novo pathway; 5-amino-1-(5-phospho-D-ribosyl)imidazole-4-carboxamide from 5-amino-1-(5-phospho-D-ribosyl)imidazole-4-carboxylate: step 1/2. This is Phosphoribosylaminoimidazole-succinocarboxamide synthase from Hamiltonella defensa subsp. Acyrthosiphon pisum (strain 5AT).